We begin with the raw amino-acid sequence, 110 residues long: Dermcidin (110 aa).

The first 19 residues, 1 to 19, serve as a signal peptide directing secretion; the sequence is MRFMTLLFLTALAGALVCA. A disordered region spans residues 24–70; sequence AASAPGSGNPCHEASAAQKENAGEDPGLARQAPKPRKQRSSLLEKGL. Serine 30 and serine 38 each carry an O-linked (Xyl...) (chondroitin sulfate) serine glycan. A propeptide spanning residues 50 to 62 is cleaved from the precursor; it reads GLARQAPKPRKQR. A helical membrane pass occupies residues 64-108; it reads SLLEKGLDGAKKAVGGLGKLGKDAVEDLESVGKGAVHDVKDVLDS. Glutamate 67 contributes to the Zn(2+) binding site. The residue at position 68 (lysine 68) is an N6-acetyllysine. Zn(2+)-binding residues include aspartate 71, aspartate 86, aspartate 90, histidine 100, and aspartate 104. Leucine 110 is a propeptide.

As to quaternary structure, homohexamer. Mn(2+) is required as a cofactor. It depends on Zn(2+) as a cofactor. In terms of tissue distribution, detected in urine (at protein level). Constitutively expressed in eccrine sweat gland cells (at protein level). Secreted into the sweat at a concentration of 1-10 micrograms/ml.

Its subcellular location is the secreted. It localises to the membrane. Its function is as follows. Found in sweat, has an antimicrobial activity during early bacterial colonization. The secreted peptide assembles into homohexameric complexes that can associate with and also insert into pathogen membranes. Once inserted in bacteria membranes forms anion channels probably altering the transmembrane potential essential for bacterial survival. Highly effective against E.coli, E.faecalis, S.aureus and C.albicans. Optimal pH and salt concentration resemble the conditions in sweat. Also exhibits proteolytic activity, cleaving on the C-terminal side of Arg and, to a lesser extent, Lys residues. Functionally, promotes survival of neurons and displays phosphatase activity. It may bind IgG. This is Dermcidin from Homo sapiens (Human).